The sequence spans 495 residues: Solute carrier family 2, facilitated glucose transporter member 3 (495 aa).

Topologically, residues 1 to 10 (MGTQKVTVSL) are cytoplasmic. A helical transmembrane segment spans residues 11–32 (IFALSIATIGSFQFGYNTGVIN). The Extracellular segment spans residues 33-64 (APETIIKDFLNYTLEEKSENLPTEVLLTSLWS). Asparagine 43 is a glycosylation site (N-linked (GlcNAc...) asparagine). Residues 65 to 85 (LSVAIFSVGGMIGSFSVGLFV) traverse the membrane as a helical segment. The Cytoplasmic portion of the chain corresponds to 86–90 (NRFGR). Residues 91–111 (RNSMLMVNLLAVAGGCLMGFC) form a helical membrane-spanning segment. Residues 112-118 (KIAQSVE) are Extracellular-facing. A helical membrane pass occupies residues 119-142 (MLILGRLIIGLFCGLCTGFVPMYI). At 143–153 (GEISPTALRGA) the chain is on the cytoplasmic side. Residues 154–174 (FGTLNQLGIVIGILVAQIFGL) traverse the membrane as a helical segment. Glutamine 159 lines the D-glucose pocket. At 175–183 (KVIMGTEEL) the chain is on the extracellular side. Residues 184–204 (WPLLLGFTIIPAVLQSAALPF) traverse the membrane as a helical segment. The Cytoplasmic segment spans residues 205–269 (CPESPRFLLI…LFRSRSYRQP (65 aa)). At threonine 232 the chain carries Phosphothreonine. Residues 270 to 290 (IIISIMLQLSQQLSGINAVFY) traverse the membrane as a helical segment. The segment at 277–279 (QLS) is important for selectivity against fructose. D-glucose is bound by residues 280–281 (QQ) and asparagine 286. Residues 291 to 304 (YSTGIFKDAGVEEP) are Extracellular-facing. A helical transmembrane segment spans residues 305-325 (IYATIGAGVVNTIFTVVSLFL). D-glucose is bound at residue asparagine 315. The Cytoplasmic segment spans residues 326–331 (VERAGR). The helical transmembrane segment at 332–352 (RTLHMIGLGGMAVCSILMTIS) threads the bilayer. At 353-363 (LLLKDNYNWMS) the chain is on the extracellular side. Residues 364-389 (FVCIGAILVFVAFFEIGPGPIPWFIV) traverse the membrane as a helical segment. D-glucose contacts are provided by glutamate 378 and tryptophan 386. The Cytoplasmic portion of the chain corresponds to 390 to 399 (AELFSQGPRP). A helical transmembrane segment spans residues 400–420 (AAMAVAGCSNWTSNFLVGLLF). Over 421-429 (PSAAFYLGA) the chain is Extracellular. Residues 430–450 (YVFIIFTGFLIVFLVFTFFKV) form a helical membrane-spanning segment. Topologically, residues 451-495 (PETRGRTFEEITRAFEGQGQDANRAEKGPIVEMNSMQPVKETATV) are cytoplasmic. At serine 485 the chain carries Phosphoserine. Threonine 492 carries the phosphothreonine modification.

This sequence belongs to the major facilitator superfamily. Sugar transporter (TC 2.A.1.1) family. Glucose transporter subfamily. As to quaternary structure, interacts with SMIM43; the interaction may promote SLC2A3-mediated glucose transport to meet the energy needs of mesendoderm differentiation.

Its subcellular location is the cell membrane. It is found in the perikaryon. It localises to the cell projection. The enzyme catalyses D-glucose(out) = D-glucose(in). It carries out the reaction D-galactose(in) = D-galactose(out). Deoxyglucose transport is inhibited by D-glucose, D-galactose and maltose. Galactose transport is inhibited by D-glucose and maltose. Functionally, facilitative glucose transporter. Can also mediate the uptake of various other monosaccharides across the cell membrane. Mediates the uptake of glucose, 2-deoxyglucose, galactose, mannose, xylose and fucose, and probably also dehydroascorbate. Does not mediate fructose transport. Required for mesendoderm differentiation. The protein is Solute carrier family 2, facilitated glucose transporter member 3 of Canis lupus familiaris (Dog).